The following is a 58-amino-acid chain: Large ribosomal subunit protein bL32 (58 aa).

It belongs to the bacterial ribosomal protein bL32 family.

The chain is Large ribosomal subunit protein bL32 from Thermobifida fusca (strain YX).